Reading from the N-terminus, the 308-residue chain is HPr kinase/phosphorylase (308 aa).

Catalysis depends on residues H138 and K159. Residue 153–160 (GESGLGKS) coordinates ATP. Residue S160 coordinates Mg(2+). D177 (proton acceptor; for phosphorylation activity. Proton donor; for dephosphorylation activity) is an active-site residue. Residues 201 to 210 (LEVRGLGLLD) form an important for the catalytic mechanism of both phosphorylation and dephosphorylation region. E202 is a Mg(2+) binding site. The active site involves R243. Residues 264–269 (QVAAGR) form an important for the catalytic mechanism of dephosphorylation region.

This sequence belongs to the HPrK/P family. In terms of assembly, homohexamer. Requires Mg(2+) as cofactor.

It carries out the reaction [HPr protein]-L-serine + ATP = [HPr protein]-O-phospho-L-serine + ADP + H(+). It catalyses the reaction [HPr protein]-O-phospho-L-serine + phosphate + H(+) = [HPr protein]-L-serine + diphosphate. In terms of biological role, catalyzes the ATP- as well as the pyrophosphate-dependent phosphorylation of a specific serine residue in HPr, a phosphocarrier protein of the phosphoenolpyruvate-dependent sugar phosphotransferase system (PTS). HprK/P also catalyzes the pyrophosphate-producing, inorganic phosphate-dependent dephosphorylation (phosphorolysis) of seryl-phosphorylated HPr (P-Ser-HPr). In Bordetella pertussis (strain Tohama I / ATCC BAA-589 / NCTC 13251), this protein is HPr kinase/phosphorylase.